Here is a 192-residue protein sequence, read N- to C-terminus: Ribosome maturation factor RimM (192 aa).

Positions 115 to 189 (EGEYYLSDLI…RIEITPPKGL (75 aa)) constitute a PRC barrel domain.

It belongs to the RimM family. As to quaternary structure, binds ribosomal protein uS19.

Its subcellular location is the cytoplasm. Its function is as follows. An accessory protein needed during the final step in the assembly of 30S ribosomal subunit, possibly for assembly of the head region. Essential for efficient processing of 16S rRNA. May be needed both before and after RbfA during the maturation of 16S rRNA. It has affinity for free ribosomal 30S subunits but not for 70S ribosomes. In Acaryochloris marina (strain MBIC 11017), this protein is Ribosome maturation factor RimM.